The primary structure comprises 311 residues: Porphobilinogen deaminase (311 aa).

C241 is modified (S-(dipyrrolylmethanemethyl)cysteine).

Belongs to the HMBS family. As to quaternary structure, monomer. Dipyrromethane is required as a cofactor.

It carries out the reaction 4 porphobilinogen + H2O = hydroxymethylbilane + 4 NH4(+). It participates in porphyrin-containing compound metabolism; protoporphyrin-IX biosynthesis; coproporphyrinogen-III from 5-aminolevulinate: step 2/4. Functionally, tetrapolymerization of the monopyrrole PBG into the hydroxymethylbilane pre-uroporphyrinogen in several discrete steps. The protein is Porphobilinogen deaminase of Shouchella clausii (strain KSM-K16) (Alkalihalobacillus clausii).